A 469-amino-acid polypeptide reads, in one-letter code: Uronate isomerase (469 aa).

Belongs to the metallo-dependent hydrolases superfamily. Uronate isomerase family.

The enzyme catalyses D-glucuronate = D-fructuronate. The catalysed reaction is aldehydo-D-galacturonate = keto-D-tagaturonate. The protein operates within carbohydrate metabolism; pentose and glucuronate interconversion. The sequence is that of Uronate isomerase from Rhizobium meliloti (strain 1021) (Ensifer meliloti).